The following is a 242-amino-acid chain: 7-cyano-7-deazaguanine synthase (242 aa).

14-24 (FSGGQDSATCL) is an ATP binding site. Zn(2+)-binding residues include C202, C217, C220, and C223.

The protein belongs to the QueC family. Requires Zn(2+) as cofactor.

The catalysed reaction is 7-carboxy-7-deazaguanine + NH4(+) + ATP = 7-cyano-7-deazaguanine + ADP + phosphate + H2O + H(+). It functions in the pathway purine metabolism; 7-cyano-7-deazaguanine biosynthesis. Catalyzes the ATP-dependent conversion of 7-carboxy-7-deazaguanine (CDG) to 7-cyano-7-deazaguanine (preQ(0)). This is 7-cyano-7-deazaguanine synthase from Rhodopseudomonas palustris (strain BisA53).